We begin with the raw amino-acid sequence, 159 residues long: Na(+)/H(+) antiporter subunit E1 (159 aa).

Helical transmembrane passes span 1–21 (MAIQ…VTNS), 27–47 (FVLG…VLPG), 60–80 (LIIT…KIIL), and 101–121 (WQLV…VLGI).

The protein belongs to the CPA3 antiporters (TC 2.A.63) subunit E family. As to quaternary structure, may form a heterooligomeric complex that consists of seven subunits: mnhA1, mnhB1, mnhC1, mnhD1, mnhE1, mnhF1 and mnhG1.

The protein localises to the cell membrane. Its function is as follows. Mnh complex is a Na(+)/H(+) antiporter involved in Na(+) excretion. The chain is Na(+)/H(+) antiporter subunit E1 (mnhE1) from Staphylococcus epidermidis (strain ATCC 35984 / DSM 28319 / BCRC 17069 / CCUG 31568 / BM 3577 / RP62A).